Consider the following 295-residue polypeptide: sn-glycerol-3-phosphate transport system permease protein UgpA (295 aa).

Over 1–11 the chain is Cytoplasmic; that stretch reads MTSSRPVFRSS. Residues 12 to 32 traverse the membrane as a helical segment; the sequence is WLPYVLVLPQLLITVIFFIWP. Residues 33 to 76 lie on the Periplasmic side of the membrane; it reads AGQALWYSVQNLDPFGLSSEFVGMENFRQLFNNPYYLDSFYTTL. The ABC transmembrane type-1 domain occupies 76–284; that stretch reads LIFSFLVAGF…LLVIGLTVIQ (209 aa). The helical transmembrane segment at 77–97 threads the bilayer; that stretch reads IFSFLVAGFGMLISLFLAALV. Over 98 to 109 the chain is Cytoplasmic; sequence DYVIRASRLYQT. A helical membrane pass occupies residues 110-130; sequence LIILPYAVAPAVAAVLWMFLF. Residues 131 to 157 lie on the Periplasmic side of the membrane; it reads NPGLGLITHFLGLLGYTWNHAQDSGQA. A helical membrane pass occupies residues 158 to 178; that stretch reads MFLVVLASVWKQISYNFLFFL. The Cytoplasmic segment spans residues 179–207; sequence AALQSIPRSLVEAGAIDGAGPVRRFFNLV. Residues 208–228 traverse the membrane as a helical segment; it reads LPMISPVSFFLLVVNLVYAFF. At 229–262 the chain is on the periplasmic side; sequence DTFPIIDAATAGGPVQSTTTLIYKIYREGFAGLD. Residues 263–283 form a helical membrane-spanning segment; the sequence is LSSSAAQSVILMLLVIGLTVI. The Cytoplasmic portion of the chain corresponds to 284–295; it reads QFRFVERKVNYQ.

Belongs to the binding-protein-dependent transport system permease family. UgpAE subfamily. As to quaternary structure, the complex is composed of two ATP-binding proteins (UgpC), two transmembrane proteins (UgpA and UgpE) and a solute-binding protein (UgpB).

It is found in the cell inner membrane. Its function is as follows. Part of the ABC transporter complex UgpBAEC involved in sn-glycerol-3-phosphate (G3P) import. Probably responsible for the translocation of the substrate across the membrane. The polypeptide is sn-glycerol-3-phosphate transport system permease protein UgpA (ugpA) (Pectobacterium atrosepticum (strain SCRI 1043 / ATCC BAA-672) (Erwinia carotovora subsp. atroseptica)).